A 269-amino-acid chain; its full sequence is Zinc import ATP-binding protein ZnuC (269 aa).

An ABC transporter domain is found at 6–221; sequence VRLTQVGVSF…PAFVELFGQD (216 aa). 38–45 is an ATP binding site; sequence GPNGAGKT.

Belongs to the ABC transporter superfamily. Zinc importer (TC 3.A.1.15.5) family. As to quaternary structure, the complex is composed of two ATP-binding proteins (ZnuC), two transmembrane proteins (ZnuB) and a solute-binding protein (ZnuA).

The protein localises to the cell inner membrane. The catalysed reaction is Zn(2+)(out) + ATP(in) + H2O(in) = Zn(2+)(in) + ADP(in) + phosphate(in) + H(+)(in). Its function is as follows. Part of the ABC transporter complex ZnuABC involved in zinc import. Responsible for energy coupling to the transport system. The polypeptide is Zinc import ATP-binding protein ZnuC (Pseudomonas aeruginosa (strain UCBPP-PA14)).